The primary structure comprises 150 residues: Arginine repressor (150 aa).

Belongs to the ArgR family.

Its subcellular location is the cytoplasm. The protein operates within amino-acid biosynthesis; L-arginine biosynthesis [regulation]. Regulates arginine biosynthesis genes. This Carboxydothermus hydrogenoformans (strain ATCC BAA-161 / DSM 6008 / Z-2901) protein is Arginine repressor.